Consider the following 101-residue polypeptide: Urease subunit beta (101 aa).

It belongs to the urease beta subunit family. In terms of assembly, heterotrimer of UreA (gamma), UreB (beta) and UreC (alpha) subunits. Three heterotrimers associate to form the active enzyme.

Its subcellular location is the cytoplasm. The catalysed reaction is urea + 2 H2O + H(+) = hydrogencarbonate + 2 NH4(+). It participates in nitrogen metabolism; urea degradation; CO(2) and NH(3) from urea (urease route): step 1/1. The sequence is that of Urease subunit beta from Ralstonia pickettii (strain 12J).